Here is a 400-residue protein sequence, read N- to C-terminus: MKEKTIIIVGGGQAAAMAAASLRQQGFTGELHLFSDERHLPYERPPLSKSMLLEDSPQLQQVLPANWWQENNVHLHSGVTIKTLGRDTRELVLTNGESWHWDQLFIATGAAARPLPLLDALGERCFTLRHAGDAARLREVLQPERSVVIIGAGTIGLELAASATQRRCKVTVIELAATVMGRNAPPPVQRYLLQRHQQAGVRILLNNAIEHVVDGEKVELTLQSGETLQADVVIYGIGISANEQLAREANLDTANGIVIDEACRTCDPAIFAGGDVAITRLDNGALHRCESWENANNQAQIAAAAMLGLPLPLLPPPWFWSDQYSDNLQFIGDMRGDDWLCRGNPETQKAIWFNLQNGVLIGAVTLNQGREIRPIRKWIQSGKTFDAKLLIDENIALKSL.

5-36 (TIIIVGGGQAAAMAAASLRQQGFTGELHLFSD) contacts FAD. 146–174 (SVVIIGAGTIGLELAASATQRRCKVTVIE) is an NAD(+) binding site.

This sequence belongs to the bacterial ring-hydroxylating dioxygenase ferredoxin reductase family. This dioxygenase system consists of four proteins: the two subunits of the hydroxylase component (HcaE and HcaF), a ferredoxin (HcaC) and a ferredoxin reductase (HcaD). FAD serves as cofactor.

It catalyses the reaction 2 reduced [2Fe-2S]-[ferredoxin] + NAD(+) + H(+) = 2 oxidized [2Fe-2S]-[ferredoxin] + NADH. The protein operates within aromatic compound metabolism; 3-phenylpropanoate degradation. Its function is as follows. Part of the multicomponent 3-phenylpropionate dioxygenase, that converts 3-phenylpropionic acid (PP) and cinnamic acid (CI) into 3-phenylpropionate-dihydrodiol (PP-dihydrodiol) and cinnamic acid-dihydrodiol (CI-dihydrodiol), respectively. The sequence is that of 3-phenylpropionate/cinnamic acid dioxygenase ferredoxin--NAD(+) reductase component from Escherichia coli (strain K12 / MC4100 / BW2952).